The sequence spans 629 residues: Long-chain-fatty-acid--AMP ligase FadD32 (629 aa).

Residues 186–191, serine 341, alanine 345, aspartate 468, and arginine 482 each bind ATP; that span reads TSGSTR.

It belongs to the ATP-dependent AMP-binding enzyme family. As to quaternary structure, monomer.

It carries out the reaction a long-chain fatty acid + holo-[ACP] + ATP = a long-chain fatty acyl-[ACP] + AMP + diphosphate. The catalysed reaction is dodecanoate + ATP + H(+) = dodecanoyl-AMP + diphosphate. The enzyme catalyses tetradecanoate + ATP + H(+) = tetradecanoyl-AMP + diphosphate. Its pathway is lipid metabolism; mycolic acid biosynthesis. With respect to regulation, the acyl-AMP ligase activity is inhibited by the alkylphosphate esters of AMP, adenosine 50-dodecylphosphate (AMPC12) and eicosyl-AMP (AMPC20). Involved in the biosynthesis of mycolic acids. Catalyzes the activation of long-chain fatty acids as acyl-adenylates (acyl-AMP), which are then transferred to the phosphopantetheine arm of the polyketide synthase Pks13 for further chain extension. Can use dodecanoate (C12) and tetradecanoate (C14). This chain is Long-chain-fatty-acid--AMP ligase FadD32 (fadD32), found in Mycobacterium marinum (strain ATCC BAA-535 / M).